The following is a 513-amino-acid chain: ATP synthase subunit alpha (513 aa).

Residue 169 to 176 (GDRQTGKT) coordinates ATP.

This sequence belongs to the ATPase alpha/beta chains family. F-type ATPases have 2 components, CF(1) - the catalytic core - and CF(0) - the membrane proton channel. CF(1) has five subunits: alpha(3), beta(3), gamma(1), delta(1), epsilon(1). CF(0) has three main subunits: a(1), b(2) and c(9-12). The alpha and beta chains form an alternating ring which encloses part of the gamma chain. CF(1) is attached to CF(0) by a central stalk formed by the gamma and epsilon chains, while a peripheral stalk is formed by the delta and b chains.

It is found in the cell inner membrane. The catalysed reaction is ATP + H2O + 4 H(+)(in) = ADP + phosphate + 5 H(+)(out). Functionally, produces ATP from ADP in the presence of a proton gradient across the membrane. The alpha chain is a regulatory subunit. The protein is ATP synthase subunit alpha of Haemophilus influenzae (strain 86-028NP).